A 439-amino-acid polypeptide reads, in one-letter code: Dihydroorotase (439 aa).

Histidine 65 and histidine 67 together coordinate Zn(2+). Substrate-binding positions include 67-69 (HFR) and asparagine 99. Positions 156, 183, 246, and 321 each coordinate Zn(2+). Residue aspartate 321 is part of the active site. Substrate-binding positions include histidine 325 and 339-340 (FG).

This sequence belongs to the metallo-dependent hydrolases superfamily. DHOase family. Class I DHOase subfamily. The cofactor is Zn(2+).

It carries out the reaction (S)-dihydroorotate + H2O = N-carbamoyl-L-aspartate + H(+). It participates in pyrimidine metabolism; UMP biosynthesis via de novo pathway; (S)-dihydroorotate from bicarbonate: step 3/3. In terms of biological role, catalyzes the reversible cyclization of carbamoyl aspartate to dihydroorotate. The polypeptide is Dihydroorotase (Chlorobaculum tepidum (strain ATCC 49652 / DSM 12025 / NBRC 103806 / TLS) (Chlorobium tepidum)).